A 202-amino-acid chain; its full sequence is Probable host range protein 2-2 (202 aa).

This sequence belongs to the poxviridae C7 protein family.

Plays a role for multiplication of the virus in different cell types. The chain is Probable host range protein 2-2 from Oryctolagus cuniculus (Rabbit).